An 89-amino-acid chain; its full sequence is Small ribosomal subunit protein uS15 (89 aa).

Belongs to the universal ribosomal protein uS15 family. Part of the 30S ribosomal subunit. Forms a bridge to the 50S subunit in the 70S ribosome, contacting the 23S rRNA.

Functionally, one of the primary rRNA binding proteins, it binds directly to 16S rRNA where it helps nucleate assembly of the platform of the 30S subunit by binding and bridging several RNA helices of the 16S rRNA. Its function is as follows. Forms an intersubunit bridge (bridge B4) with the 23S rRNA of the 50S subunit in the ribosome. The protein is Small ribosomal subunit protein uS15 of Streptococcus agalactiae serotype Ia (strain ATCC 27591 / A909 / CDC SS700).